A 394-amino-acid polypeptide reads, in one-letter code: Elongation factor Tu (394 aa).

Positions 10–204 constitute a tr-type G domain; it reads KPHINIGTIG…AVDDNIPTPE (195 aa). The interval 19–26 is G1; sequence GHVDHGKT. 19–26 serves as a coordination point for GTP; the sequence is GHVDHGKT. Thr26 contributes to the Mg(2+) binding site. The segment at 60–64 is G2; sequence GITIN. Residues 81–84 are G3; the sequence is DCPG. GTP contacts are provided by residues 81–85 and 136–139; these read DCPGH and NKID. A G4 region spans residues 136-139; it reads NKID. The G5 stretch occupies residues 174 to 176; that stretch reads SAL.

Belongs to the TRAFAC class translation factor GTPase superfamily. Classic translation factor GTPase family. EF-Tu/EF-1A subfamily. As to quaternary structure, monomer.

The protein resides in the cytoplasm. The catalysed reaction is GTP + H2O = GDP + phosphate + H(+). Functionally, GTP hydrolase that promotes the GTP-dependent binding of aminoacyl-tRNA to the A-site of ribosomes during protein biosynthesis. The protein is Elongation factor Tu of Chlamydia felis (strain Fe/C-56) (Chlamydophila felis).